The sequence spans 206 residues: Ribosomal RNA small subunit methyltransferase G (206 aa).

Residues G73, L78, 124-125, and R139 contribute to the S-adenosyl-L-methionine site; that span reads VE.

This sequence belongs to the methyltransferase superfamily. RNA methyltransferase RsmG family.

Its subcellular location is the cytoplasm. The enzyme catalyses guanosine(527) in 16S rRNA + S-adenosyl-L-methionine = N(7)-methylguanosine(527) in 16S rRNA + S-adenosyl-L-homocysteine. Specifically methylates the N7 position of guanine in position 527 of 16S rRNA. This chain is Ribosomal RNA small subunit methyltransferase G, found in Pectobacterium carotovorum subsp. carotovorum (strain PC1).